We begin with the raw amino-acid sequence, 95 residues long: MRLFILILSAILLLFQYDLWFGKNGYLDYKETAEEIAMHKAENTKLSQRNQVVAAEIRDLKDGVEAIQERARLQYELVKPNETFYRIAKENKDNR.

Topologically, residues Met-1–Leu-3 are cytoplasmic. Residues Phe-4–Phe-21 traverse the membrane as a helical segment. Residues Gly-22–Arg-95 lie on the Periplasmic side of the membrane. A coiled-coil region spans residues Asp-28–Asp-62.

This sequence belongs to the FtsB family. In terms of assembly, part of a complex composed of FtsB, FtsL and FtsQ.

The protein resides in the cell inner membrane. Essential cell division protein. May link together the upstream cell division proteins, which are predominantly cytoplasmic, with the downstream cell division proteins, which are predominantly periplasmic. This chain is Cell division protein FtsB, found in Mannheimia succiniciproducens (strain KCTC 0769BP / MBEL55E).